Here is a 195-residue protein sequence, read N- to C-terminus: MSHVWGLFSHPDREMQVINRENETISHHYTHHVLLMAAIPVICAFIGTTQIGWNFGDGTILKLSWFTGLALAVLFYGVMLAGVAVMGRVIWWMARNYPQRPSLAHCMVFAGYVATPLFLSGLVALYPLVWLCALVGTVALFYTGYLLYLGIPSFLNINKEEGLSFSSSTLAIGVLVLEVLLALTVILWGYGYRLF.

Residues 1 to 32 lie on the Cytoplasmic side of the membrane; the sequence is MSHVWGLFSHPDREMQVINRENETISHHYTHH. Residues 33–55 traverse the membrane as a helical segment; sequence VLLMAAIPVICAFIGTTQIGWNF. At 56-64 the chain is on the periplasmic side; that stretch reads GDGTILKLS. A helical membrane pass occupies residues 65 to 87; sequence WFTGLALAVLFYGVMLAGVAVMG. The Cytoplasmic portion of the chain corresponds to 88–107; the sequence is RVIWWMARNYPQRPSLAHCM. A helical transmembrane segment spans residues 108–130; the sequence is VFAGYVATPLFLSGLVALYPLVW. The Periplasmic segment spans residues 131–134; it reads LCAL. The chain crosses the membrane as a helical span at residues 135-157; that stretch reads VGTVALFYTGYLLYLGIPSFLNI. Topologically, residues 158–169 are cytoplasmic; sequence NKEEGLSFSSST. The helical transmembrane segment at 170–192 threads the bilayer; that stretch reads LAIGVLVLEVLLALTVILWGYGY. At 193 to 195 the chain is on the periplasmic side; sequence RLF.

Its subcellular location is the cell inner membrane. This Escherichia coli O6:H1 (strain CFT073 / ATCC 700928 / UPEC) protein is Inner membrane protein YohC (yohC).